The primary structure comprises 289 residues: Acetyl-coenzyme A carboxylase carboxyl transferase subunit beta (289 aa).

The CoA carboxyltransferase N-terminal domain occupies 27-289; it reads LWSKCPSCES…SFMRVPAGAA (263 aa). The Zn(2+) site is built by cysteine 31, cysteine 34, cysteine 50, and cysteine 53. The C4-type zinc finger occupies 31–53; sequence CPSCESVLYRTDLESNSEVCPKC.

It belongs to the AccD/PCCB family. In terms of assembly, acetyl-CoA carboxylase is a heterohexamer composed of biotin carboxyl carrier protein (AccB), biotin carboxylase (AccC) and two subunits each of ACCase subunit alpha (AccA) and ACCase subunit beta (AccD). The cofactor is Zn(2+).

The protein localises to the cytoplasm. The enzyme catalyses N(6)-carboxybiotinyl-L-lysyl-[protein] + acetyl-CoA = N(6)-biotinyl-L-lysyl-[protein] + malonyl-CoA. Its pathway is lipid metabolism; malonyl-CoA biosynthesis; malonyl-CoA from acetyl-CoA: step 1/1. Functionally, component of the acetyl coenzyme A carboxylase (ACC) complex. Biotin carboxylase (BC) catalyzes the carboxylation of biotin on its carrier protein (BCCP) and then the CO(2) group is transferred by the transcarboxylase to acetyl-CoA to form malonyl-CoA. In Methylobacillus flagellatus (strain ATCC 51484 / DSM 6875 / VKM B-1610 / KT), this protein is Acetyl-coenzyme A carboxylase carboxyl transferase subunit beta.